Here is a 261-residue protein sequence, read N- to C-terminus: Imidazole glycerol phosphate synthase subunit HisF (261 aa).

Active-site residues include D16 and D135.

It belongs to the HisA/HisF family. As to quaternary structure, heterodimer of HisH and HisF.

It is found in the cytoplasm. It carries out the reaction 5-[(5-phospho-1-deoxy-D-ribulos-1-ylimino)methylamino]-1-(5-phospho-beta-D-ribosyl)imidazole-4-carboxamide + L-glutamine = D-erythro-1-(imidazol-4-yl)glycerol 3-phosphate + 5-amino-1-(5-phospho-beta-D-ribosyl)imidazole-4-carboxamide + L-glutamate + H(+). Its pathway is amino-acid biosynthesis; L-histidine biosynthesis; L-histidine from 5-phospho-alpha-D-ribose 1-diphosphate: step 5/9. Its function is as follows. IGPS catalyzes the conversion of PRFAR and glutamine to IGP, AICAR and glutamate. The HisF subunit catalyzes the cyclization activity that produces IGP and AICAR from PRFAR using the ammonia provided by the HisH subunit. This chain is Imidazole glycerol phosphate synthase subunit HisF, found in Mycobacterium ulcerans (strain Agy99).